The sequence spans 100 residues: Urease subunit gamma (100 aa).

Belongs to the urease gamma subunit family. Heterotrimer of UreA (gamma), UreB (beta) and UreC (alpha) subunits. Three heterotrimers associate to form the active enzyme.

The protein resides in the cytoplasm. The enzyme catalyses urea + 2 H2O + H(+) = hydrogencarbonate + 2 NH4(+). The protein operates within nitrogen metabolism; urea degradation; CO(2) and NH(3) from urea (urease route): step 1/1. This chain is Urease subunit gamma, found in Yersinia bercovieri.